The chain runs to 1048 residues: Histone deacetylase complex subunit SAP130 (1048 aa).

The tract at residues 1–95 is disordered; sequence MGPPRHPQAG…LQSREEKQEP (95 aa). The segment covering 40–54 has biased composition (polar residues); sequence TGLSQAPSQIANSGS. The segment covering 67–80 has biased composition (basic and acidic residues); that stretch reads ESGRDSEVSAREHM. An Omega-N-methylarginine modification is found at R232. A Phosphothreonine modification is found at T355. Residues S442 and S465 each carry the phosphoserine modification. Disordered stretches follow at residues 458–477, 576–617, and 649–687; these read PISG…RSDN, IGTP…PEGK, and QTHS…SEIH. 2 stretches are compositionally biased toward polar residues: residues 590-613 and 649-667; these read GIHS…QQPQ and QTHS…SSPR. K785 participates in a covalent cross-link: Glycyl lysine isopeptide (Lys-Gly) (interchain with G-Cter in SUMO2). The disordered stretch occupies residues 819–871; that stretch reads LSMPTSDLPPGASPRKKPRKQQHVISTEEGDMMETNSTDDEKSTAKSLLVKAE. The tract at residues 836 to 1047 is interactions with SIN3A and HDAC1; it reads PRKQQHVIST…KVSKLKRKEK (212 aa). S855 bears the Phosphoserine mark. T856 bears the Phosphothreonine mark. Residues K864 and K869 each participate in a glycyl lysine isopeptide (Lys-Gly) (interchain with G-Cter in SUMO2) cross-link. Phosphoserine is present on S875.

This sequence belongs to the SAP130 family. In terms of assembly, component of a mSin3A corepressor complex that contains SIN3A, SAP130, SUDS3/SAP45, ARID4B/SAP180, HDAC1 and HDAC2. Interacts (released by dead or dying cells) with CLEC4E. Acetylated. In terms of processing, sumoylated with SUMO1. As to expression, expressed in various cancer cell ines.

It is found in the nucleus. Acts as a transcriptional repressor. May function in the assembly and/or enzymatic activity of the mSin3A corepressor complex or in mediating interactions between the complex and other regulatory complexes. The protein is Histone deacetylase complex subunit SAP130 (SAP130) of Homo sapiens (Human).